The following is a 970-amino-acid chain: Testis anion transporter 1 (970 aa).

The Cytoplasmic segment spans residues 1–95 (MAQLERSAIS…YRLKDWLLGD (95 aa)). The chain crosses the membrane as a helical span at residues 96–116 (LLAGISVGLVQVPQGLTLSLL). Topologically, residues 117–119 (ARQ) are extracellular. The chain crosses the membrane as a helical span at residues 120–140 (LIPPLNIAYAAFCSSVIYVIF). At 141–146 (GSCHQM) the chain is on the cytoplasmic side. Residues 147–167 (SIGSFFLVSALLINVLKVSPF) form a helical membrane-spanning segment. Topologically, residues 168 to 202 (NNGQLVMGSFVKNEFSAPSYLMGYNKSLSVVATTT) are extracellular. N-linked (GlcNAc...) asparagine glycosylation occurs at N192. Residues 203–223 (FLTGIIQLIMGVLGLGFIATY) traverse the membrane as a helical segment. The Cytoplasmic portion of the chain corresponds to 224–232 (LPESAMSAY). Residues 233–253 (LAAVALHIMLSQLTFIFGIMI) traverse the membrane as a helical segment. Residues 254-270 (SFHAGPISFFYDIINYC) are Extracellular-facing. A helical membrane pass occupies residues 271–291 (VALPKANSTSILVFLTVVVAL). The Cytoplasmic segment spans residues 292–307 (RINKCIRISFNQYPIE). Residues 308–328 (FPMELFLIIGFTVIANKISMA) traverse the membrane as a helical segment. Over 329–355 (TETSQTLIDMIPYSFLLPVTPDFSLLP) the chain is Extracellular. A helical transmembrane segment spans residues 356-376 (KIILQAFSLSLVSSFLLIFLG). Over 377–392 (KKIASLHNYSVNSNQD) the chain is Cytoplasmic. The chain crosses the membrane as a helical span at residues 393-413 (LIAIGLCNVVSSFFRSCVFTG). At 414-429 (AIARTIIQDKSGGRQQ) the chain is on the extracellular side. A helical membrane pass occupies residues 430 to 450 (FASLVGAGVMLLLMVKMGHFF). Residues 451 to 452 (YT) are Cytoplasmic-facing. Residues 453-473 (LPNAVLAGIILSNVIPYLETI) traverse the membrane as a helical segment. Topologically, residues 474 to 497 (SNLPSLWRQDQYDCALWMMTFSSS) are extracellular. The chain crosses the membrane as a helical span at residues 498–518 (IFLGLDIGLIISVVSAFFITT). Over 519 to 970 (VRSHRAKILL…SPEGNSNEDV (452 aa)) the chain is Cytoplasmic. The STAS domain occupies 543 to 795 (DYREIITIPG…LSVHDAVLFA (253 aa)). Residues 664 to 970 (TVSSVSQKNQ…SPEGNSNEDV (307 aa)) are interaction with RACGAP1. The segment covering 858–868 (SELDLELESEQ) has biased composition (acidic residues). Residues 858-970 (SELDLELESE…SPEGNSNEDV (113 aa)) are disordered. Over residues 877–898 (DLDRELEPEMEPKAETETKTQT) the composition is skewed to basic and acidic residues. Residues 938–948 (STQSQTQTRTW) show a composition bias toward low complexity.

Belongs to the SLC26A/SulP transporter (TC 2.A.53) family. Interacts with RACGAP1. Interacts with CFTR; stimulates anion transport activity of CFTR. In terms of processing, N-glycosylated. In terms of tissue distribution, expression observed exclusively in testis, restricted to the meiotic phase of the germ cell. Abundant expression located in the seminiferous tubules, concentrated on the luminal side of the tubuli harboring the spermatocytes and spermatids.

The protein localises to the membrane. The enzyme catalyses sulfate(out) + chloride(in) = sulfate(in) + chloride(out). It catalyses the reaction oxalate(in) + chloride(out) = oxalate(out) + chloride(in). With respect to regulation, activity is inhibited by 4,4'-Di-isothiocyanatostilbene-2,2'-disulfonic acid (DIDS - an inhibitor of several anion channels and transporters) and gluconate. Its function is as follows. Antiporter that mediates the exchange of sulfate and oxalate against chloride ions across a membrane. Stimulates anion transport activity of CFTR. May cooperate with CFTR in the regulation of chloride and bicarbonate ions fluxes required for activation of the ADCY10/PKA pathway during sperm motility and sperm capacitation. May play a role in sperm tail differentiation and motility and hence male fertility. The chain is Testis anion transporter 1 from Homo sapiens (Human).